Consider the following 245-residue polypeptide: Leucyl/phenylalanyl-tRNA--protein transferase (245 aa).

This sequence belongs to the L/F-transferase family.

Its subcellular location is the cytoplasm. The catalysed reaction is N-terminal L-lysyl-[protein] + L-leucyl-tRNA(Leu) = N-terminal L-leucyl-L-lysyl-[protein] + tRNA(Leu) + H(+). It carries out the reaction N-terminal L-arginyl-[protein] + L-leucyl-tRNA(Leu) = N-terminal L-leucyl-L-arginyl-[protein] + tRNA(Leu) + H(+). The enzyme catalyses L-phenylalanyl-tRNA(Phe) + an N-terminal L-alpha-aminoacyl-[protein] = an N-terminal L-phenylalanyl-L-alpha-aminoacyl-[protein] + tRNA(Phe). In terms of biological role, functions in the N-end rule pathway of protein degradation where it conjugates Leu, Phe and, less efficiently, Met from aminoacyl-tRNAs to the N-termini of proteins containing an N-terminal arginine or lysine. This chain is Leucyl/phenylalanyl-tRNA--protein transferase, found in Paraburkholderia phytofirmans (strain DSM 17436 / LMG 22146 / PsJN) (Burkholderia phytofirmans).